The sequence spans 169 residues: Nucleoside diphosphate kinase 3 (169 aa).

ADP contacts are provided by Lys-29, Arg-105, Thr-111, Arg-122, Val-129, and Asn-132. The active-site Pros-phosphohistidine intermediate is His-135.

The protein belongs to the NDK family. In terms of assembly, homohexamer. Interacts (via its N-terminal region) with KAT5; this interaction enables recruitment of NME3 at DNA damage sites where it plays a role in the repair of DNA. Found in association with several ciliary nephronophthisis proteins, including NEK8, CEP164, ANKS6. Mg(2+) serves as cofactor.

The protein resides in the mitochondrion outer membrane. Its subcellular location is the cytoplasm. It localises to the cytoskeleton. It is found in the cilium basal body. It catalyses the reaction a 2'-deoxyribonucleoside 5'-diphosphate + ATP = a 2'-deoxyribonucleoside 5'-triphosphate + ADP. The catalysed reaction is a ribonucleoside 5'-diphosphate + ATP = a ribonucleoside 5'-triphosphate + ADP. Functionally, catalyzes the phosphorylation of ribonucleosides and deoxyribonucleoside diphosphates, other than ATP, into the corresponding triphosphates with ATP as the major phosphate donor. The ATP gamma phosphate is transferred to the nucleoside diphosphate beta phosphate via a ping-pong mechanism, using a phosphorylated active-site intermediate. Through the catalyzed exchange of gamma-phosphate between di- and triphosphonucleosides participates in regulation of intracellular nucleotide homeostasis. Inhibits granulocyte differentiation. May be required for ciliary function during renal development. Independently of its kinase activity, facilitates mitochondrial tethering prior to membrane fusion through its direct membrane-binding and hexamerization. Implicated in repair of both single- and double-stranded breaks in DNA through its association with the ribonucleotide reductase complex (RNR complex) via its interaction with the histone acetyltransferase KAT5, this interaction enables recruitment of NME3 at DNA damage sites where it plays a role in the repair of DNA, independently of its kinase activity. The polypeptide is Nucleoside diphosphate kinase 3 (Homo sapiens (Human)).